Consider the following 186-residue polypeptide: Tumor necrosis factor alpha-induced protein 8-like protein 1 (186 aa).

The protein belongs to the TNFAIP8 family. In terms of assembly, interacts with FBXW5; TNFAIP8L1 competes with TSC2 to bind FBXW5 increasing TSC2 stability by preventing its ubiquitination. In terms of tissue distribution, detected in wide variety tissues, such as neurons in brain, hepatocytes, germ cells of female and male reproductive organs, muscular tissues and variety types of cells of the epithelial origin (at protein level).

Its subcellular location is the cytoplasm. Acts as a negative regulator of mTOR activity. In Mus musculus (Mouse), this protein is Tumor necrosis factor alpha-induced protein 8-like protein 1 (Tnfaip8l1).